A 316-amino-acid chain; its full sequence is Pantothenate kinase (316 aa).

95 to 102 provides a ligand contact to ATP; sequence GSVAVGKS.

The protein belongs to the prokaryotic pantothenate kinase family.

The protein localises to the cytoplasm. The catalysed reaction is (R)-pantothenate + ATP = (R)-4'-phosphopantothenate + ADP + H(+). Its pathway is cofactor biosynthesis; coenzyme A biosynthesis; CoA from (R)-pantothenate: step 1/5. This chain is Pantothenate kinase, found in Shewanella piezotolerans (strain WP3 / JCM 13877).